Here is a 122-residue protein sequence, read N- to C-terminus: Large ribosomal subunit protein uL14c (122 aa).

Belongs to the universal ribosomal protein uL14 family. Part of the 50S ribosomal subunit.

Its subcellular location is the plastid. It is found in the chloroplast. In terms of biological role, binds to 23S rRNA. The protein is Large ribosomal subunit protein uL14c of Manihot esculenta (Cassava).